Reading from the N-terminus, the 262-residue chain is Flap endonuclease Xni (262 aa).

Aspartate 105 provides a ligand contact to Mg(2+). A 5'-3' exonuclease domain is found at 162–257 (ERSQFLDLMA…FRVIDSPPEK (96 aa)). Leucine 172, alanine 173, proline 181, isoleucine 183, and isoleucine 186 together coordinate K(+). The segment at 185–190 (GIGPKS) is interaction with DNA.

Belongs to the Xni family. Mg(2+) is required as a cofactor. The cofactor is K(+).

Its function is as follows. Has flap endonuclease activity. During DNA replication, flap endonucleases cleave the 5'-overhanging flap structure that is generated by displacement synthesis when DNA polymerase encounters the 5'-end of a downstream Okazaki fragment. In Shewanella baltica (strain OS223), this protein is Flap endonuclease Xni.